A 152-amino-acid chain; its full sequence is Deoxyuridine 5'-triphosphate nucleotidohydrolase (152 aa).

Substrate-binding positions include 71-73, N84, 88-90, and K98; these read RSG and LID.

The protein belongs to the dUTPase family. Requires Mg(2+) as cofactor.

It catalyses the reaction dUTP + H2O = dUMP + diphosphate + H(+). It participates in pyrimidine metabolism; dUMP biosynthesis; dUMP from dCTP (dUTP route): step 2/2. In terms of biological role, this enzyme is involved in nucleotide metabolism: it produces dUMP, the immediate precursor of thymidine nucleotides and it decreases the intracellular concentration of dUTP so that uracil cannot be incorporated into DNA. This is Deoxyuridine 5'-triphosphate nucleotidohydrolase from Legionella pneumophila subsp. pneumophila (strain Philadelphia 1 / ATCC 33152 / DSM 7513).